Here is a 2098-residue protein sequence, read N- to C-terminus: Non-reducing polyketide synthase crz7 (2098 aa).

In terms of domain architecture, Starter acyltransferase (SAT) spans 8–243; the sequence is ILFGDQTVDP…IKLPITAAFH (236 aa). The region spanning 364 to 789 is the Ketosynthase family 3 (KS3) domain; that stretch reads SSDIAIIGFA…GGNTSLLLED (426 aa). Residues cysteine 532, histidine 667, and histidine 706 each act as for beta-ketoacyl synthase activity in the active site. The Malonyl-CoA:ACP transacylase (MAT) domain maps to 887 to 1211; the sequence is IFLFTGQGSQ…IANAYNSGVK (325 aa). An N-terminal hotdog fold region spans residues 1270–1404; the sequence is TCLQGVENET…CTVMYGDGQQ (135 aa). Positions 1270-1578 constitute a PKS/mFAS DH domain; it reads TCLQGVENET…FQQMKRTTLQ (309 aa). Histidine 1305 functions as the Proton acceptor; for dehydratase activity in the catalytic mechanism. The interval 1431 to 1578 is C-terminal hotdog fold; sequence IHRMLKEMIY…FQQMKRTTLQ (148 aa). Aspartate 1491 acts as the Proton donor; for dehydratase activity in catalysis. Residues 1613–1690 form the Carrier 1 domain; that stretch reads QSPSAGFSKV…ELRAFFLDKM (78 aa). Position 1650 is an O-(pantetheine 4'-phosphoryl)serine (serine 1650). The interval 1693–1725 is disordered; it reads PQATANDDDSDDSSEDEDPGYSRSQSNSTISTP. The segment covering 1698 to 1711 has biased composition (acidic residues); the sequence is NDDDSDDSSEDEDP. A compositionally biased stretch (polar residues) spans 1714–1724; it reads SRSQSNSTIST. A Carrier 2 domain is found at 1725–1802; sequence PEEPDVVSIL…DVQKALGPTS (78 aa). The residue at position 1762 (serine 1762) is an O-(pantetheine 4'-phosphoryl)serine. The interval 1844 to 2080 is thioesterase (TE) domain; the sequence is LFLLPDGAGS…VSGNHFSIMF (237 aa).

Requires pantetheine 4'-phosphate as cofactor.

The protein operates within secondary metabolite biosynthesis. In terms of biological role, non-reducing polyketide synthase; part of the gene cluster that mediates the biosynthesis of the red pigment cristazarin, a naphthazarin derivative. The polyketide product of crz7 is likely 2-acetyl-1,3,6,8-tetrahydoxynaphthalene (AT4HN) from which a probable biosynthetic route of cristazarin can be deduced. The presence of two O-methyltransferases (crz1 and crz2), an enoyl reductase (crz5), an oxidase (crz8), and a short-chain dehydrogenase (crz9) encoded in the cristazarin biosynthetic cluster is consistent with methylation of a hydroxyl group, addition of two hydroxyl groups to the naphthalene core ring, and reduction of the acetyl side chain. This Cladonia metacorallifera (Lichen-forming fungus) protein is Non-reducing polyketide synthase crz7.